Consider the following 323-residue polypeptide: Formimidoylglutamase (323 aa).

Residues His131, Asp157, His159, Asp161, Cys245, and Asp247 each coordinate Mn(2+).

Belongs to the arginase family. The cofactor is Mn(2+).

It carries out the reaction N-formimidoyl-L-glutamate + H2O = formamide + L-glutamate. Its pathway is amino-acid degradation; L-histidine degradation into L-glutamate; L-glutamate from N-formimidoyl-L-glutamate (hydrolase route): step 1/1. Its function is as follows. Catalyzes the conversion of N-formimidoyl-L-glutamate to L-glutamate and formamide. In Geobacillus kaustophilus (strain HTA426), this protein is Formimidoylglutamase.